The sequence spans 389 residues: Lipid-A-disaccharide synthase (389 aa).

This sequence belongs to the LpxB family.

The catalysed reaction is a lipid X + a UDP-2-N,3-O-bis[(3R)-3-hydroxyacyl]-alpha-D-glucosamine = a lipid A disaccharide + UDP + H(+). It participates in bacterial outer membrane biogenesis; LPS lipid A biosynthesis. Condensation of UDP-2,3-diacylglucosamine and 2,3-diacylglucosamine-1-phosphate to form lipid A disaccharide, a precursor of lipid A, a phosphorylated glycolipid that anchors the lipopolysaccharide to the outer membrane of the cell. The protein is Lipid-A-disaccharide synthase of Burkholderia cenocepacia (strain ATCC BAA-245 / DSM 16553 / LMG 16656 / NCTC 13227 / J2315 / CF5610) (Burkholderia cepacia (strain J2315)).